Consider the following 296-residue polypeptide: 4-hydroxybenzoate octaprenyltransferase (296 aa).

Transmembrane regions (helical) follow at residues 28–48 (IGTL…SDGI), 51–71 (LAVL…GCVI), 102–122 (LLLT…LNHL), 143–163 (FFPI…PMAF), 174–194 (AWIL…VYAM), 212–232 (FGRY…LLMA), 233–253 (VLGA…IVLL), and 274–294 (FLAN…HTFF).

It belongs to the UbiA prenyltransferase family. Mg(2+) is required as a cofactor.

The protein resides in the cell inner membrane. It carries out the reaction all-trans-octaprenyl diphosphate + 4-hydroxybenzoate = 4-hydroxy-3-(all-trans-octaprenyl)benzoate + diphosphate. It participates in cofactor biosynthesis; ubiquinone biosynthesis. Its function is as follows. Catalyzes the prenylation of para-hydroxybenzoate (PHB) with an all-trans polyprenyl group. Mediates the second step in the final reaction sequence of ubiquinone-8 (UQ-8) biosynthesis, which is the condensation of the polyisoprenoid side chain with PHB, generating the first membrane-bound Q intermediate 3-octaprenyl-4-hydroxybenzoate. The chain is 4-hydroxybenzoate octaprenyltransferase from Neisseria gonorrhoeae (strain NCCP11945).